The sequence spans 138 residues: ATP synthase epsilon chain (138 aa).

Belongs to the ATPase epsilon chain family. In terms of assembly, F-type ATPases have 2 components, CF(1) - the catalytic core - and CF(0) - the membrane proton channel. CF(1) has five subunits: alpha(3), beta(3), gamma(1), delta(1), epsilon(1). CF(0) has three main subunits: a, b and c.

The protein resides in the cell inner membrane. Produces ATP from ADP in the presence of a proton gradient across the membrane. The polypeptide is ATP synthase epsilon chain (Cupriavidus pinatubonensis (strain JMP 134 / LMG 1197) (Cupriavidus necator (strain JMP 134))).